A 361-amino-acid polypeptide reads, in one-letter code: Alternative oxidase, mitochondrial (361 aa).

Residues 155–175 (LIRYVFLESVAGVPGMVAGML) traverse the membrane as a helical segment. Residues Glu-162, Glu-201, and His-204 each coordinate Fe cation. A helical transmembrane segment spans residues 221–241 (MILGAQGVFFNSFFLCYLFSP). 4 residues coordinate Fe cation: Glu-252, Glu-253, Glu-309, and His-312. Residues 320–361 (GNLKQDEDPNPFVSEYGKERGEKPGKGIESLKPVGWERDEVI) are disordered. Over residues 335–345 (YGKERGEKPGK) the composition is skewed to basic and acidic residues.

The protein belongs to the alternative oxidase family. Fe cation serves as cofactor.

The protein resides in the mitochondrion inner membrane. Its function is as follows. Catalyzes cyanide-resistant oxygen consumption. May increase respiration when the cytochrome respiratory pathway is restricted, or in response to low temperatures. In Botryotinia fuckeliana (Noble rot fungus), this protein is Alternative oxidase, mitochondrial (aox).